The chain runs to 185 residues: Ribosome-recycling factor (185 aa).

It belongs to the RRF family.

It localises to the cytoplasm. In terms of biological role, responsible for the release of ribosomes from messenger RNA at the termination of protein biosynthesis. May increase the efficiency of translation by recycling ribosomes from one round of translation to another. This Wolbachia sp. subsp. Drosophila simulans (strain wRi) protein is Ribosome-recycling factor.